The sequence spans 620 residues: Chaperone protein HscA homolog (620 aa).

The protein belongs to the heat shock protein 70 family.

Chaperone involved in the maturation of iron-sulfur cluster-containing proteins. Has a low intrinsic ATPase activity which is markedly stimulated by HscB. The polypeptide is Chaperone protein HscA homolog (Acinetobacter baumannii (strain SDF)).